Reading from the N-terminus, the 203-residue chain is Glycerol-3-phosphate acyltransferase (203 aa).

4 helical membrane-spanning segments follow: residues 6–26 (LTLL…AVLV), 82–102 (AISL…PVFF), 118–138 (APIG…LVLI), and 141–161 (YSSL…WWLD).

Belongs to the PlsY family. As to quaternary structure, probably interacts with PlsX.

It is found in the cell inner membrane. It carries out the reaction an acyl phosphate + sn-glycerol 3-phosphate = a 1-acyl-sn-glycero-3-phosphate + phosphate. The protein operates within lipid metabolism; phospholipid metabolism. Catalyzes the transfer of an acyl group from acyl-phosphate (acyl-PO(4)) to glycerol-3-phosphate (G3P) to form lysophosphatidic acid (LPA). This enzyme utilizes acyl-phosphate as fatty acyl donor, but not acyl-CoA or acyl-ACP. This is Glycerol-3-phosphate acyltransferase from Shewanella oneidensis (strain ATCC 700550 / JCM 31522 / CIP 106686 / LMG 19005 / NCIMB 14063 / MR-1).